Reading from the N-terminus, the 768-residue chain is Gephyrin (768 aa).

The tract at residues 14 to 166 (QIRVGVLTVS…LPGSKKGSQE (153 aa)) is MPT Mo-transferase. The tract at residues 153–348 (LIINLPGSKK…VDITKVARRH (196 aa)) is interaction with GABARAP. 2 disordered regions span residues 194–245 (DELE…DSSS) and 273–316 (TASL…ASRV). Residues 200–212 (PSPPPPLSPPPTT) show a composition bias toward pro residues. Ser201 and Ser207 each carry phosphoserine. Thr211 carries the phosphothreonine modification. Ser213 carries the phosphoserine modification. Residue Cys225 is the site of S-palmitoyl cysteine attachment. A compositionally biased stretch (polar residues) spans 274–299 (ASLSTTPSESPRAQATSRLSTASCPT). Ser275 bears the Phosphoserine mark. 2 positions are modified to phosphothreonine: Thr278 and Thr279. Phosphoserine is present on residues Ser281 and Ser283. Cys297 carries the S-palmitoyl cysteine lipid modification. Positions 326 to 768 (SSKENILRAS…VVDVMVIGRL (443 aa)) are MPT adenylyltransferase. A Phosphoserine modification is found at Ser337.

This sequence in the N-terminal section; belongs to the MoaB/Mog family. In the C-terminal section; belongs to the MoeA family. Homotrimer, homodimer and homooligomer. Interacts with SRGAP2 (via SH3 domain). Interacts with GLRB. Interacts with GABARAP. Interacts with GABRA3. GABRA3 and GLRB occupy overlapping binding sites. Interacts with ARHGAP32; IQSEC3, INSYN1 and INSYN2A. The cofactor is Mg(2+). In terms of processing, phosphorylated. Post-translationally, palmitoylated. Palmitoylation is stimulated by GABA type A receptors activity. Palmitoylation by ZDHHC12 regulates clustering at synapses. Expressed in tissues including spinal cord, brain, liver, kidney and lung.

The protein localises to the postsynaptic cell membrane. Its subcellular location is the cell membrane. The protein resides in the cytoplasm. It is found in the cytosol. It localises to the cytoskeleton. The protein localises to the cell projection. Its subcellular location is the dendrite. The protein resides in the postsynaptic density. The catalysed reaction is molybdopterin + ATP + H(+) = adenylyl-molybdopterin + diphosphate. It catalyses the reaction adenylyl-molybdopterin + molybdate = Mo-molybdopterin + AMP + H(+). The protein operates within cofactor biosynthesis; molybdopterin biosynthesis. With respect to regulation, inhibited by copper and tungsten. In terms of biological role, microtubule-associated protein involved in membrane protein-cytoskeleton interactions. It is thought to anchor the inhibitory glycine receptor (GLYR) to subsynaptic microtubules. Acts as a major instructive molecule at inhibitory synapses, where it also clusters GABA type A receptors. Functionally, also has a catalytic activity and catalyzes two steps in the biosynthesis of the molybdenum cofactor. In the first step, molybdopterin is adenylated. Subsequently, molybdate is inserted into adenylated molybdopterin and AMP is released. The polypeptide is Gephyrin (Gphn) (Rattus norvegicus (Rat)).